We begin with the raw amino-acid sequence, 858 residues long: DNA mismatch repair protein MutS (858 aa).

613–620 (GPNMAGKS) lines the ATP pocket.

The protein belongs to the DNA mismatch repair MutS family.

This protein is involved in the repair of mismatches in DNA. It is possible that it carries out the mismatch recognition step. This protein has a weak ATPase activity. The polypeptide is DNA mismatch repair protein MutS (Dehalococcoides mccartyi (strain CBDB1)).